We begin with the raw amino-acid sequence, 310 residues long: N-acetyl-gamma-glutamyl-phosphate reductase (310 aa).

Cysteine 117 is a catalytic residue.

The protein belongs to the NAGSA dehydrogenase family. Type 2 subfamily.

The protein resides in the cytoplasm. The enzyme catalyses N-acetyl-L-glutamate 5-semialdehyde + phosphate + NADP(+) = N-acetyl-L-glutamyl 5-phosphate + NADPH + H(+). The protein operates within amino-acid biosynthesis; L-arginine biosynthesis; N(2)-acetyl-L-ornithine from L-glutamate: step 3/4. Its function is as follows. Catalyzes the NADPH-dependent reduction of N-acetyl-5-glutamyl phosphate to yield N-acetyl-L-glutamate 5-semialdehyde. This is N-acetyl-gamma-glutamyl-phosphate reductase from Rhizobium leguminosarum bv. trifolii (strain WSM2304).